The chain runs to 149 residues: MEKAILITFLIATTSMVYQTIGQEEEISPISPESLAYEPAAAYEYDHELLSHMTTRRIKFLQDCSDKMSSKCNVEMTEGLIDDKPVSEDCCVNFLKIGRECHEGLMTFVFATYELKDVASAILPRSKRMWNKCVETTAAKIGAPLAFET.

Positions 1 to 22 (MEKAILITFLIATTSMVYQTIG) are cleaved as a signal peptide.

As to expression, mostly expressed in embryo sac cells. Restricted to synergid cells, especially in the filiform apparatus of mature female gametophyte, via MYB98-mediated transcription regulation. Also detected at low levels in egg and central cells.

The polypeptide is Protein DOWN-REGULATED IN DIF1 11 (Arabidopsis thaliana (Mouse-ear cress)).